The sequence spans 632 residues: Golgin subfamily A member 8J (632 aa).

Residues 1-76 (MAEETQHNKL…TSSATLKDLE (76 aa)) are disordered. Coiled-coil stretches lie at residues 86–154 (LDSR…HMKR) and 220–421 (LKVQ…SLMA). Basic and acidic residues-rich tracts occupy residues 352 to 362 (KQEERIQEQHK) and 427 to 440 (HGGEHLDSEGEEAP). Disordered regions lie at residues 352-377 (KQEERIQEQHKSLQQLAKPQSVFKEP), 423-452 (PGEGHGGEHLDSEGEEAPRPMPSVPEDPES), and 496-524 (LSEPGGRAKDAALGGGHHQAGAQGGDEGE). Residues 508–520 (LGGGHHQAGAQGG) show a composition bias toward gly residues.

This sequence belongs to the GOLGA8 family.

This is Golgin subfamily A member 8J (GOLGA8J) from Homo sapiens (Human).